Reading from the N-terminus, the 336-residue chain is NADH-quinone oxidoreductase subunit H (336 aa).

Transmembrane regions (helical) follow at residues 4 to 24, 75 to 95, 108 to 128, 154 to 174, 181 to 201, 233 to 253, 272 to 292, and 308 to 328; these read YILW…LVVA, YLFF…WAVI, LGLL…VIAG, MGFA…TGII, IWHW…IAGI, LFFL…SIMF, FVPG…MFLW, and LGWK…ACMV.

This sequence belongs to the complex I subunit 1 family. As to quaternary structure, NDH-1 is composed of 14 different subunits. Subunits NuoA, H, J, K, L, M, N constitute the membrane sector of the complex.

The protein localises to the cell inner membrane. The enzyme catalyses a quinone + NADH + 5 H(+)(in) = a quinol + NAD(+) + 4 H(+)(out). In terms of biological role, NDH-1 shuttles electrons from NADH, via FMN and iron-sulfur (Fe-S) centers, to quinones in the respiratory chain. The immediate electron acceptor for the enzyme in this species is believed to be ubiquinone. Couples the redox reaction to proton translocation (for every two electrons transferred, four hydrogen ions are translocated across the cytoplasmic membrane), and thus conserves the redox energy in a proton gradient. This subunit may bind ubiquinone. This chain is NADH-quinone oxidoreductase subunit H, found in Francisella tularensis subsp. mediasiatica (strain FSC147).